Consider the following 449-residue polypeptide: Glucose-6-phosphate isomerase (449 aa).

Glu-291 functions as the Proton donor in the catalytic mechanism. Catalysis depends on residues His-312 and Lys-426.

The protein belongs to the GPI family.

Its subcellular location is the cytoplasm. The catalysed reaction is alpha-D-glucose 6-phosphate = beta-D-fructose 6-phosphate. It participates in carbohydrate biosynthesis; gluconeogenesis. Its pathway is carbohydrate degradation; glycolysis; D-glyceraldehyde 3-phosphate and glycerone phosphate from D-glucose: step 2/4. Its function is as follows. Catalyzes the reversible isomerization of glucose-6-phosphate to fructose-6-phosphate. This Streptococcus equi subsp. zooepidemicus (strain MGCS10565) protein is Glucose-6-phosphate isomerase.